The chain runs to 478 residues: Adenylosuccinate lyase (478 aa).

Residues 14 to 15, 81 to 83, and 107 to 108 each bind substrate; these read RY, KHD, and TS. Residue H155 is the Proton donor/acceptor of the active site. Q237 is a binding site for substrate. The active-site Proton donor/acceptor is S285. Positions 299, 325, 330, and 334 each coordinate substrate.

Belongs to the lyase 1 family. Adenylosuccinate lyase subfamily. Homotetramer. Residues from neighboring subunits contribute catalytic and substrate-binding residues to each active site.

It carries out the reaction N(6)-(1,2-dicarboxyethyl)-AMP = fumarate + AMP. It catalyses the reaction (2S)-2-[5-amino-1-(5-phospho-beta-D-ribosyl)imidazole-4-carboxamido]succinate = 5-amino-1-(5-phospho-beta-D-ribosyl)imidazole-4-carboxamide + fumarate. It participates in purine metabolism; AMP biosynthesis via de novo pathway; AMP from IMP: step 2/2. The protein operates within purine metabolism; IMP biosynthesis via de novo pathway; 5-amino-1-(5-phospho-D-ribosyl)imidazole-4-carboxamide from 5-amino-1-(5-phospho-D-ribosyl)imidazole-4-carboxylate: step 2/2. In terms of biological role, catalyzes two non-sequential steps in de novo AMP synthesis: converts (S)-2-(5-amino-1-(5-phospho-D-ribosyl)imidazole-4-carboxamido)succinate (SAICAR) to fumarate plus 5-amino-1-(5-phospho-D-ribosyl)imidazole-4-carboxamide, and thereby also contributes to de novo IMP synthesis, and converts succinyladenosine monophosphate (SAMP) to AMP and fumarate. The sequence is that of Adenylosuccinate lyase from Caenorhabditis briggsae.